Consider the following 156-residue polypeptide: Small ribosomal subunit protein uS7 (156 aa).

This sequence belongs to the universal ribosomal protein uS7 family. Part of the 30S ribosomal subunit. Contacts proteins S9 and S11.

In terms of biological role, one of the primary rRNA binding proteins, it binds directly to 16S rRNA where it nucleates assembly of the head domain of the 30S subunit. Is located at the subunit interface close to the decoding center, probably blocks exit of the E-site tRNA. This is Small ribosomal subunit protein uS7 from Streptococcus uberis (strain ATCC BAA-854 / 0140J).